Consider the following 344-residue polypeptide: D-beta-hydroxybutyrate dehydrogenase, mitochondrial (344 aa).

Residues 1–46 constitute a mitochondrion transit peptide; sequence MLTARLSRPLSQLPRKTLNFSDRENGTRGSLLLYSAPFVPVGRRTY. 59–83 lines the NAD(+) pocket; the sequence is LITGCDSGFGFSLAKHLHSEGFLVF. An N6-acetyllysine mark is found at Lys73 and Lys97. Lys103 bears the N6-acetyllysine; alternate mark. Lys103 bears the N6-succinyllysine; alternate mark. Lys177 is modified (N6-acetyllysine). Ser195 is a binding site for substrate. Residue Tyr208 is the Proton acceptor of the active site. Residue Lys212 is modified to N6-acetyllysine. An O-linked (GlcNAc) serine glycan is attached at Ser219. The residue at position 246 (Ser246) is a Phosphoserine. Lys260 carries the post-translational modification N6-acetyllysine; alternate. Residue Lys260 is modified to N6-succinyllysine; alternate. At Lys281 the chain carries N6-acetyllysine.

Belongs to the short-chain dehydrogenases/reductases (SDR) family. Homotetramer.

Its subcellular location is the mitochondrion inner membrane. The protein resides in the mitochondrion matrix. It catalyses the reaction (R)-3-hydroxybutanoate + NAD(+) = acetoacetate + NADH + H(+). Its activity is regulated as follows. Requires phosphatidylcholine as an allosteric activator for enzymatic activity. The sequence is that of D-beta-hydroxybutyrate dehydrogenase, mitochondrial from Bos taurus (Bovine).